The sequence spans 231 residues: 5'-methylthioadenosine/S-adenosylhomocysteine nucleosidase (231 aa).

E12 (proton acceptor) is an active-site residue. Substrate contacts are provided by residues G78, I153, and 174–175 (ME). D198 serves as the catalytic Proton donor.

Belongs to the PNP/UDP phosphorylase family. MtnN subfamily.

The enzyme catalyses S-adenosyl-L-homocysteine + H2O = S-(5-deoxy-D-ribos-5-yl)-L-homocysteine + adenine. It carries out the reaction S-methyl-5'-thioadenosine + H2O = 5-(methylsulfanyl)-D-ribose + adenine. The catalysed reaction is 5'-deoxyadenosine + H2O = 5-deoxy-D-ribose + adenine. It participates in amino-acid biosynthesis; L-methionine biosynthesis via salvage pathway; S-methyl-5-thio-alpha-D-ribose 1-phosphate from S-methyl-5'-thioadenosine (hydrolase route): step 1/2. In terms of biological role, catalyzes the irreversible cleavage of the glycosidic bond in both 5'-methylthioadenosine (MTA) and S-adenosylhomocysteine (SAH/AdoHcy) to adenine and the corresponding thioribose, 5'-methylthioribose and S-ribosylhomocysteine, respectively. Also cleaves 5'-deoxyadenosine, a toxic by-product of radical S-adenosylmethionine (SAM) enzymes, into 5-deoxyribose and adenine. The polypeptide is 5'-methylthioadenosine/S-adenosylhomocysteine nucleosidase (Shewanella sp. (strain W3-18-1)).